We begin with the raw amino-acid sequence, 255 residues long: MKVKVFDLNGQPVDEIELPKVFFTPFRPDLIRRAVIASWTHRIQPQGRDPMAGKRRVTENIGKGHGMARVERLKTPPRYAAFVPFARGGRRTHPPKVEKIIWEGINKKERRLAIMSAIAATANYDIVKARGHIIDNVPQLPLIVVDDLQKVSKTRETREIFKKLGIWDDIERAKEKTGIRAGKGKMRGRRYKKAKGPLIVVGKNEGIVFGARNHPGVDVVVVDNLGVEHLAPGTHPGRLTVWTVSAIERLKEIYG.

The protein belongs to the universal ribosomal protein uL4 family. In terms of assembly, part of the 50S ribosomal subunit.

Its function is as follows. One of the primary rRNA binding proteins, this protein initially binds near the 5'-end of the 23S rRNA. It is important during the early stages of 50S assembly. It makes multiple contacts with different domains of the 23S rRNA in the assembled 50S subunit and ribosome. Forms part of the polypeptide exit tunnel. The protein is Large ribosomal subunit protein uL4 of Pyrococcus abyssi (strain GE5 / Orsay).